The primary structure comprises 211 residues: MPERPYSTTVFRDAARALAATGQRIYANGWSPATSSNYSQRLNTDFAAVTQSGKDKGLLRETDIMAVNMDGQPASSGKPSAETLLHTQLYRFDGNIQAVLHTHSHASTVLTMHWPANSITLEGYELLKALQGITSHNSRLTIPVFENTQDIAALAAKVDQQMRSGHISHAYLIRGHGLYTWANDLPTCYRQLEALETLLAIELECRRLRGS.

H101 and H103 together coordinate Zn(2+).

The protein belongs to the aldolase class II family. MtnB subfamily. It depends on Zn(2+) as a cofactor.

It carries out the reaction 5-(methylsulfanyl)-D-ribulose 1-phosphate = 5-methylsulfanyl-2,3-dioxopentyl phosphate + H2O. It participates in amino-acid biosynthesis; L-methionine biosynthesis via salvage pathway; L-methionine from S-methyl-5-thio-alpha-D-ribose 1-phosphate: step 2/6. Catalyzes the dehydration of methylthioribulose-1-phosphate (MTRu-1-P) into 2,3-diketo-5-methylthiopentyl-1-phosphate (DK-MTP-1-P). This is Methylthioribulose-1-phosphate dehydratase from Alcanivorax borkumensis (strain ATCC 700651 / DSM 11573 / NCIMB 13689 / SK2).